The following is an 809-amino-acid chain: Phenylalanine--tRNA ligase beta subunit (809 aa).

The tRNA-binding domain maps to 39-153 (APPFSQIVVG…EDTPVGADIR (115 aa)). The 76-residue stretch at 404–479 (PKREPVRMRV…RIYGFEQIPA (76 aa)) folds into the B5 domain. Positions 457, 463, 466, and 467 each coordinate Mg(2+). In terms of domain architecture, FDX-ACB spans 706–808 (PRVPAVTRDI…AGDAFGARLR (103 aa)).

It belongs to the phenylalanyl-tRNA synthetase beta subunit family. Type 1 subfamily. As to quaternary structure, tetramer of two alpha and two beta subunits. Mg(2+) is required as a cofactor.

The protein localises to the cytoplasm. The enzyme catalyses tRNA(Phe) + L-phenylalanine + ATP = L-phenylalanyl-tRNA(Phe) + AMP + diphosphate + H(+). This Ralstonia nicotianae (strain ATCC BAA-1114 / GMI1000) (Ralstonia solanacearum) protein is Phenylalanine--tRNA ligase beta subunit.